A 1117-amino-acid polypeptide reads, in one-letter code: Protocadherin-11 X-linked (1117 aa).

The signal sequence occupies residues 1–23; the sequence is MDLLSGTHIFAVLLACIVFQSGA. The Extracellular segment spans residues 24 to 812; that stretch reads QEKNYTIREE…ASSPSSDYVK (789 aa). Asn27 and Asn48 each carry an N-linked (GlcNAc...) asparagine glycan. 7 consecutive Cadherin domains span residues 27 to 139, 140 to 249, 250 to 355, 362 to 466, 467 to 570, 571 to 673, and 677 to 795; these read NYTI…APLF, PATV…RPVF, KENE…IPSI, NPIN…APVF, TQPF…SPVF, THNE…KPVF, and SSNY…TPVT. N-linked (GlcNAc...) asparagine glycosylation occurs at Asn344. N-linked (GlcNAc...) asparagine glycosylation occurs at Asn553. A helical membrane pass occupies residues 813 to 833; that stretch reads IVVAIVAGTITVILVIFITAV. At 834-1117 the chain is on the cytoplasmic side; sequence VRCQQSPHLK…DGNSDPESGK (284 aa). Residues 1029–1039 show a composition bias toward polar residues; it reads TVEIWTHPQPQ. The interval 1029 to 1117 is disordered; it reads TVEIWTHPQP…DGNSDPESGK (89 aa).

As to expression, expressed in adrenal gland, brain, heart, kidney, lung, prostate, skeletal muscle, testis and thymus.

The protein localises to the cell membrane. Its function is as follows. Potential calcium-dependent cell-adhesion protein. The protein is Protocadherin-11 X-linked (PCDH11X) of Sus scrofa (Pig).